We begin with the raw amino-acid sequence, 1420 residues long: DNA-directed RNA polymerase subunit beta' (1420 aa).

Residues C70, C72, C85, and C88 each contribute to the Zn(2+) site. The Mg(2+) site is built by D464, D466, and D468. Zn(2+)-binding residues include C823, C897, C904, and C907.

The protein belongs to the RNA polymerase beta' chain family. The RNAP catalytic core consists of 2 alpha, 1 beta, 1 beta' and 1 omega subunit. When a sigma factor is associated with the core the holoenzyme is formed, which can initiate transcription. Mg(2+) is required as a cofactor. It depends on Zn(2+) as a cofactor.

It carries out the reaction RNA(n) + a ribonucleoside 5'-triphosphate = RNA(n+1) + diphosphate. Functionally, DNA-dependent RNA polymerase catalyzes the transcription of DNA into RNA using the four ribonucleoside triphosphates as substrates. This is DNA-directed RNA polymerase subunit beta' from Polynucleobacter asymbioticus (strain DSM 18221 / CIP 109841 / QLW-P1DMWA-1) (Polynucleobacter necessarius subsp. asymbioticus).